Consider the following 374-residue polypeptide: Alpha-N-acetylgalactosaminide alpha-2,6-sialyltransferase 2 (374 aa).

Residues 1-7 (MGLPRGS) lie on the Cytoplasmic side of the membrane. The chain crosses the membrane as a helical; Signal-anchor for type II membrane protein span at residues 8–28 (FFWLLLLLTAACSGLLFALYF). Topologically, residues 29-374 (SAVQRYPGPA…KAGILQLYQR (346 aa)) are lumenal. Disulfide bonds link Cys66–Cys148 and Cys151–Cys317. Residues Asn85 and Asn130 are each glycosylated (N-linked (GlcNAc...) asparagine). Asn156 contributes to the CMP-N-acetyl-beta-neuraminate binding site. Residue Asn161 is glycosylated (N-linked (GlcNAc...) asparagine). Residues Asn179, Ser304, and His336 each coordinate CMP-N-acetyl-beta-neuraminate.

The protein belongs to the glycosyltransferase 29 family. Expressed in skeletal muscle, heart, kidney, placenta, lung and leukocytes.

The protein resides in the golgi apparatus membrane. The enzyme catalyses a beta-D-galactosyl-(1-&gt;3)-N-acetyl-alpha-D-galactosaminyl derivative + CMP-N-acetyl-beta-neuraminate = a beta-D-galactosyl-(1-&gt;3)-[N-acetyl-alpha-neuraminyl-(2-&gt;6)]-N-acetyl-alpha-D-galactosaminyl derivative + CMP + H(+). The catalysed reaction is a 3-O-[N-acetyl-alpha-D-galactosaminyl]-L-threonyl-[protein] + CMP-N-acetyl-beta-neuraminate = a 3-O-[N-acetyl-alpha-neuraminosyl-(2-&gt;6)-N-acetyl-alpha-D-galactosaminyl]-L-threonyl-[protein] + CMP + H(+). It carries out the reaction a 3-O-[N-acetyl-alpha-neuraminyl-(2-&gt;3)-beta-D-galactosyl-(1-&gt;3)-N-acetyl-alpha-D-galactosaminyl]-L-threonyl-[protein] + CMP-N-acetyl-beta-neuraminate = a 3-O-{alpha-Neu5Ac-(2-&gt;3)-beta-D-Gal-(1-&gt;3)-[alpha-Neu5Ac-(2-&gt;6)]-alpha-D-GalNAc}-L-threonyl-[protein] + CMP + H(+). It functions in the pathway protein modification; protein glycosylation. Catalyzes the transfer of N-acetylneuraminyl groups onto glycan chains in glycoproteins. Conjugates sialic acid with an alpha-2-6 linkage to N-acetylgalactosamine (GalNAc) glycan chains linked to serine or threonine in glycoproteins. Sialylates alphaGalNAc- and Galbeta1-&gt;3GalNAc-O-Ser/Thr epitopes also known as Tn and T antigens. The sequence is that of Alpha-N-acetylgalactosaminide alpha-2,6-sialyltransferase 2 (ST6GALNAC2) from Homo sapiens (Human).